Reading from the N-terminus, the 445-residue chain is Phosphoglucosamine mutase (445 aa).

The active-site Phosphoserine intermediate is the Ser101. 4 residues coordinate Mg(2+): Ser101, Asp240, Asp242, and Asp244. Ser101 carries the post-translational modification Phosphoserine.

This sequence belongs to the phosphohexose mutase family. The cofactor is Mg(2+). In terms of processing, activated by phosphorylation.

It carries out the reaction alpha-D-glucosamine 1-phosphate = D-glucosamine 6-phosphate. Functionally, catalyzes the conversion of glucosamine-6-phosphate to glucosamine-1-phosphate. The chain is Phosphoglucosamine mutase from Ectopseudomonas mendocina (strain ymp) (Pseudomonas mendocina).